A 239-amino-acid polypeptide reads, in one-letter code: MTTGDLVNIHPTELKFPFELKKQSSCSMQLTNKTTTQCVAFKVKTTNPRKYCVRPNTGVVLPGDSCNVTVTMQAQKEAPLDMQCKDKFLVQTVVVSDGTTSKEVLAEMFNKEAGRVIEDFKLRVVYIPANPPSPVPEGSEEGNSPMASLNDIASQSASLFDDVSRTFEETSEKSSEAWSMISKLTEEKTSATQQSQKLRLELEMLRKETSKKQSGGHSLLLMLLVGLLGCVIGYLLNRI.

N-acetylmethionine is present on Met1. Thr2 is modified (N-acetylthreonine; in Vesicle-associated protein 1-3, N-terminally processed). The Cytoplasmic portion of the chain corresponds to 2 to 215 (TTGDLVNIHP…RKETSKKQSG (214 aa)). Residues 6–127 (LVNIHPTELK…EDFKLRVVYI (122 aa)) enclose the MSP domain. 2 positions are modified to phosphoserine: Ser133 and Ser164. Residues 179 to 214 (SMISKLTEEKTSATQQSQKLRLELEMLRKETSKKQS) are a coiled coil. The chain crosses the membrane as a helical; Anchor for type IV membrane protein span at residues 216–236 (GHSLLLMLLVGLLGCVIGYLL).

This sequence belongs to the VAMP-associated protein (VAP) (TC 9.B.17) family.

The protein localises to the endoplasmic reticulum membrane. Its function is as follows. May play a role in vesicle trafficking. In Arabidopsis thaliana (Mouse-ear cress), this protein is Vesicle-associated protein 1-3 (PVA13).